We begin with the raw amino-acid sequence, 336 residues long: uncharacterized protein (336 aa).

Positions 162–195 are disordered; the sequence is ARGLPVHSSFKQNNSSQTSSNKGTTTVAAGSGSD. A compositionally biased stretch (low complexity) spans 169 to 187; the sequence is SSFKQNNSSQTSSNKGTTT.

The protein belongs to the AHA1 family.

This is an uncharacterized protein from Schizosaccharomyces pombe (strain 972 / ATCC 24843) (Fission yeast).